Consider the following 390-residue polypeptide: Sorting nexin C1711.11 (390 aa).

In terms of domain architecture, PX spans 1 to 123 (MLKCTIKNEQ…QFLENNSWKS (123 aa)). A 1,2-diacyl-sn-glycero-3-phospho-(1D-myo-inositol-3-phosphate)-binding residues include Arg-44, Lys-70, and Arg-89.

It belongs to the sorting nexin family.

The protein localises to the cytoplasm. It localises to the membrane. In Schizosaccharomyces pombe (strain 972 / ATCC 24843) (Fission yeast), this protein is Sorting nexin C1711.11.